The chain runs to 265 residues: GTP cyclohydrolase FolE2 (265 aa).

The protein belongs to the GTP cyclohydrolase IV family.

The catalysed reaction is GTP + H2O = 7,8-dihydroneopterin 3'-triphosphate + formate + H(+). The protein operates within cofactor biosynthesis; 7,8-dihydroneopterin triphosphate biosynthesis; 7,8-dihydroneopterin triphosphate from GTP: step 1/1. Its function is as follows. Converts GTP to 7,8-dihydroneopterin triphosphate. In Magnetococcus marinus (strain ATCC BAA-1437 / JCM 17883 / MC-1), this protein is GTP cyclohydrolase FolE2.